Consider the following 424-residue polypeptide: Histidine--tRNA ligase (424 aa).

It belongs to the class-II aminoacyl-tRNA synthetase family. Homodimer.

Its subcellular location is the cytoplasm. It catalyses the reaction tRNA(His) + L-histidine + ATP = L-histidyl-tRNA(His) + AMP + diphosphate + H(+). This is Histidine--tRNA ligase from Shigella sonnei (strain Ss046).